Here is a 415-residue protein sequence, read N- to C-terminus: Imidazolonepropionase (415 aa).

Fe(3+) is bound by residues His80 and His82. Positions 80 and 82 each coordinate Zn(2+). Residues Arg89, Tyr152, and His185 each contribute to the 4-imidazolone-5-propanoate site. Tyr152 is a binding site for N-formimidoyl-L-glutamate. A Fe(3+)-binding site is contributed by His250. A Zn(2+)-binding site is contributed by His250. Position 253 (Gln253) interacts with 4-imidazolone-5-propanoate. Fe(3+) is bound at residue Asp325. Residue Asp325 participates in Zn(2+) binding. Residues Asn327 and Gly329 each coordinate N-formimidoyl-L-glutamate. Residue Thr330 participates in 4-imidazolone-5-propanoate binding.

The protein belongs to the metallo-dependent hydrolases superfamily. HutI family. Requires Zn(2+) as cofactor. Fe(3+) serves as cofactor.

The protein resides in the cytoplasm. It catalyses the reaction 4-imidazolone-5-propanoate + H2O = N-formimidoyl-L-glutamate. The protein operates within amino-acid degradation; L-histidine degradation into L-glutamate; N-formimidoyl-L-glutamate from L-histidine: step 3/3. Its function is as follows. Catalyzes the hydrolytic cleavage of the carbon-nitrogen bond in imidazolone-5-propanoate to yield N-formimidoyl-L-glutamate. It is the third step in the universal histidine degradation pathway. The sequence is that of Imidazolonepropionase from Rhizobium meliloti (strain 1021) (Ensifer meliloti).